We begin with the raw amino-acid sequence, 344 residues long: Protein RecA (344 aa).

65-72 lines the ATP pocket; it reads GPESSGKT.

It belongs to the RecA family.

It localises to the cytoplasm. Can catalyze the hydrolysis of ATP in the presence of single-stranded DNA, the ATP-dependent uptake of single-stranded DNA by duplex DNA, and the ATP-dependent hybridization of homologous single-stranded DNAs. It interacts with LexA causing its activation and leading to its autocatalytic cleavage. This is Protein RecA from Rubrobacter xylanophilus (strain DSM 9941 / JCM 11954 / NBRC 16129 / PRD-1).